A 76-amino-acid polypeptide reads, in one-letter code: Liver-expressed antimicrobial peptide 2 (76 aa).

An N-terminal signal peptide occupies residues 1–22; that stretch reads MLQLKLFAVLLTCLLLLGQVNS. Positions 23–36 are excised as a propeptide; that stretch reads SPVPEVSSAKRSRR. 2 cysteine pairs are disulfide-bonded: Cys53–Cys64 and Cys59–Cys69.

This sequence belongs to the LEAP2 family.

The protein localises to the secreted. In terms of biological role, has an antimicrobial activity. This chain is Liver-expressed antimicrobial peptide 2 (Leap2), found in Mus musculus (Mouse).